Consider the following 154-residue polypeptide: 6,7-dimethyl-8-ribityllumazine synthase (154 aa).

Residues phenylalanine 22, 56-58, and 80-82 each bind 5-amino-6-(D-ribitylamino)uracil; these read AFE and TVI. 85–86 lines the (2S)-2-hydroxy-3-oxobutyl phosphate pocket; sequence ST. Residue histidine 88 is the Proton donor of the active site. 5-amino-6-(D-ribitylamino)uracil is bound at residue phenylalanine 113. Arginine 127 is a (2S)-2-hydroxy-3-oxobutyl phosphate binding site.

It belongs to the DMRL synthase family.

It catalyses the reaction (2S)-2-hydroxy-3-oxobutyl phosphate + 5-amino-6-(D-ribitylamino)uracil = 6,7-dimethyl-8-(1-D-ribityl)lumazine + phosphate + 2 H2O + H(+). It functions in the pathway cofactor biosynthesis; riboflavin biosynthesis; riboflavin from 2-hydroxy-3-oxobutyl phosphate and 5-amino-6-(D-ribitylamino)uracil: step 1/2. In terms of biological role, catalyzes the formation of 6,7-dimethyl-8-ribityllumazine by condensation of 5-amino-6-(D-ribitylamino)uracil with 3,4-dihydroxy-2-butanone 4-phosphate. This is the penultimate step in the biosynthesis of riboflavin. The sequence is that of 6,7-dimethyl-8-ribityllumazine synthase from Lactococcus lactis subsp. lactis (strain IL1403) (Streptococcus lactis).